The sequence spans 78 residues: Large ribosomal subunit protein bL28 (78 aa).

The protein belongs to the bacterial ribosomal protein bL28 family.

The sequence is that of Large ribosomal subunit protein bL28 from Klebsiella pneumoniae (strain 342).